The sequence spans 438 residues: UPF0597 protein YE0448 (438 aa).

The protein belongs to the UPF0597 family.

This Yersinia enterocolitica serotype O:8 / biotype 1B (strain NCTC 13174 / 8081) protein is UPF0597 protein YE0448.